The sequence spans 131 residues: Translation initiation factor 5A (131 aa).

Lys-36 is subject to Hypusine.

The protein belongs to the eIF-5A family.

It localises to the cytoplasm. In terms of biological role, functions by promoting the formation of the first peptide bond. The protein is Translation initiation factor 5A of Sulfurisphaera tokodaii (strain DSM 16993 / JCM 10545 / NBRC 100140 / 7) (Sulfolobus tokodaii).